The chain runs to 93 residues: Small ribosomal subunit protein uS19 (93 aa).

This sequence belongs to the universal ribosomal protein uS19 family.

In terms of biological role, protein S19 forms a complex with S13 that binds strongly to the 16S ribosomal RNA. This chain is Small ribosomal subunit protein uS19 (rpsS), found in Thermus thermophilus (strain ATCC BAA-163 / DSM 7039 / HB27).